The chain runs to 309 residues: MAILVIAEHNNAALAAATLNTVAAAKAIGGDIHVLVAGQNVAAVAEAAAKVEGVSKVLVADNAAYAHQLPENVAPLIAELGKNYSHVLAPATTNGKNFLPRVAALLDVDQISEIVEVVSPDTFKRPIYAGNAIATVQSSAAVKVITVRTTGFDAVAAEGGSAAVEQVSGPADAGKSAFVGEELAKSDRPELTAAKIVVSGGRGMQNGDNFKILYALADKLGAAVGASRAAVDAGFVPNDMQVGQTGKIVAPQLYIAVGISGAIQHLAGMKDSKVIVAINKDEEAPIFQVADYGLVADLFDAVPELEKAV.

253–281 lines the FAD pocket; it reads LYIAVGISGAIQHLAGMKDSKVIVAINKD.

The protein belongs to the ETF alpha-subunit/FixB family. Heterodimer of an alpha and a beta subunit. FAD is required as a cofactor.

In terms of biological role, the electron transfer flavoprotein serves as a specific electron acceptor for other dehydrogenases. It transfers the electrons to the main respiratory chain via ETF-ubiquinone oxidoreductase (ETF dehydrogenase). This chain is Electron transfer flavoprotein subunit alpha (etfA), found in Pseudomonas aeruginosa (strain ATCC 15692 / DSM 22644 / CIP 104116 / JCM 14847 / LMG 12228 / 1C / PRS 101 / PAO1).